We begin with the raw amino-acid sequence, 495 residues long: Chromosomal replication initiator protein DnaA (495 aa).

Positions 1 to 83 are domain I, interacts with DnaA modulators; sequence MSVALWQQCL…KVQLTVGSRR (83 aa). The segment at 83–158 is domain II; sequence RNVAMSSPRD…QVEGSLKHQS (76 aa). The interval 86 to 127 is disordered; that stretch reads AMSSPRDLGAPVSATTMNASRPTEAPAVHAAPRAKGDYADEQ. The interval 159–375 is domain III, AAA+ region; the sequence is GLNPNFTFET…GALKKVIADS (217 aa). Residues Gly203, Gly205, Lys206, and Thr207 each coordinate ATP. Positions 376–495 are domain IV, binds dsDNA; it reads HFMGKPITQD…YKNLLRLLTS (120 aa).

It belongs to the DnaA family. In terms of assembly, oligomerizes as a right-handed, spiral filament on DNA at oriC.

The protein localises to the cytoplasm. In terms of biological role, plays an essential role in the initiation and regulation of chromosomal replication. ATP-DnaA binds to the origin of replication (oriC) to initiate formation of the DNA replication initiation complex once per cell cycle. Binds the DnaA box (a 9 base pair repeat at the origin) and separates the double-stranded (ds)DNA. Forms a right-handed helical filament on oriC DNA; dsDNA binds to the exterior of the filament while single-stranded (ss)DNA is stabiized in the filament's interior. The ATP-DnaA-oriC complex binds and stabilizes one strand of the AT-rich DNA unwinding element (DUE), permitting loading of DNA polymerase. After initiation quickly degrades to an ADP-DnaA complex that is not apt for DNA replication. Binds acidic phospholipids. The protein is Chromosomal replication initiator protein DnaA of Chromohalobacter salexigens (strain ATCC BAA-138 / DSM 3043 / CIP 106854 / NCIMB 13768 / 1H11).